The following is a 119-amino-acid chain: Large ribosomal subunit protein bL20 (119 aa).

The protein belongs to the bacterial ribosomal protein bL20 family.

Functionally, binds directly to 23S ribosomal RNA and is necessary for the in vitro assembly process of the 50S ribosomal subunit. It is not involved in the protein synthesizing functions of that subunit. The polypeptide is Large ribosomal subunit protein bL20 (Bordetella petrii (strain ATCC BAA-461 / DSM 12804 / CCUG 43448)).